Here is a 368-residue protein sequence, read N- to C-terminus: Histidinol-phosphate aminotransferase (368 aa).

Position 229 is an N6-(pyridoxal phosphate)lysine (K229).

It belongs to the class-II pyridoxal-phosphate-dependent aminotransferase family. Histidinol-phosphate aminotransferase subfamily. In terms of assembly, homodimer. Requires pyridoxal 5'-phosphate as cofactor.

It catalyses the reaction L-histidinol phosphate + 2-oxoglutarate = 3-(imidazol-4-yl)-2-oxopropyl phosphate + L-glutamate. Its pathway is amino-acid biosynthesis; L-histidine biosynthesis; L-histidine from 5-phospho-alpha-D-ribose 1-diphosphate: step 7/9. This Acidovorax sp. (strain JS42) protein is Histidinol-phosphate aminotransferase.